A 137-amino-acid polypeptide reads, in one-letter code: Large ribosomal subunit protein uL16 (137 aa).

It belongs to the universal ribosomal protein uL16 family. Part of the 50S ribosomal subunit.

Binds 23S rRNA and is also seen to make contacts with the A and possibly P site tRNAs. This Acinetobacter baylyi (strain ATCC 33305 / BD413 / ADP1) protein is Large ribosomal subunit protein uL16.